The chain runs to 352 residues: Heat-inducible transcription repressor HrcA (352 aa).

This sequence belongs to the HrcA family.

Functionally, negative regulator of class I heat shock genes (grpE-dnaK-dnaJ and groELS operons). Prevents heat-shock induction of these operons. The protein is Heat-inducible transcription repressor HrcA of Latilactobacillus sakei subsp. sakei (strain 23K) (Lactobacillus sakei subsp. sakei).